A 308-amino-acid polypeptide reads, in one-letter code: D-alanine--D-alanine ligase (308 aa).

The 200-residue stretch at 103–302 (KTVMATAGVP…FDELVQWMVE (200 aa)) folds into the ATP-grasp domain. 130–184 (MAPPYVIKPVADGSSVGVFIVTEDQAHPPQELFRDDWPHGEELLVEKYIAGRELT) is a binding site for ATP. Residues D252, E269, and N271 each contribute to the Mg(2+) site.

This sequence belongs to the D-alanine--D-alanine ligase family. Requires Mg(2+) as cofactor. It depends on Mn(2+) as a cofactor.

It is found in the cytoplasm. It catalyses the reaction 2 D-alanine + ATP = D-alanyl-D-alanine + ADP + phosphate + H(+). It participates in cell wall biogenesis; peptidoglycan biosynthesis. Its function is as follows. Cell wall formation. This Afipia carboxidovorans (strain ATCC 49405 / DSM 1227 / KCTC 32145 / OM5) (Oligotropha carboxidovorans) protein is D-alanine--D-alanine ligase.